The chain runs to 83 residues: Defensin-2 (83 aa).

Residues 1-33 (MAGKGVGTPLSALFLLVLLVVTIGMMEVQVAEG) form the signal peptide. Disulfide bonds link C36–C82, C47–C67, C53–C76, and C57–C78.

Belongs to the DEFL family.

It localises to the secreted. In terms of biological role, plant defense peptide. Has antifungal activity. The sequence is that of Defensin-2 from Pinus sylvestris (Scotch pine).